The following is a 213-amino-acid chain: Nicotinate-nucleotide adenylyltransferase (213 aa).

The protein belongs to the NadD family.

The catalysed reaction is nicotinate beta-D-ribonucleotide + ATP + H(+) = deamido-NAD(+) + diphosphate. It participates in cofactor biosynthesis; NAD(+) biosynthesis; deamido-NAD(+) from nicotinate D-ribonucleotide: step 1/1. Catalyzes the reversible adenylation of nicotinate mononucleotide (NaMN) to nicotinic acid adenine dinucleotide (NaAD). In Salmonella typhi, this protein is Nicotinate-nucleotide adenylyltransferase.